A 178-amino-acid polypeptide reads, in one-letter code: Bifunctional protein PyrR (178 aa).

A PRPP-binding motif is present at residues 99–111; it reads VIIVDDVLYTCRT.

The protein belongs to the purine/pyrimidine phosphoribosyltransferase family. PyrR subfamily. As to quaternary structure, homodimer and homohexamer; in equilibrium.

The enzyme catalyses UMP + diphosphate = 5-phospho-alpha-D-ribose 1-diphosphate + uracil. Functionally, regulates transcriptional attenuation of the pyrimidine nucleotide (pyr) operon by binding in a uridine-dependent manner to specific sites on pyr mRNA. This disrupts an antiterminator hairpin in the RNA and favors formation of a downstream transcription terminator, leading to a reduced expression of downstream genes. Also displays a weak uracil phosphoribosyltransferase activity which is not physiologically significant. The polypeptide is Bifunctional protein PyrR (Clostridium perfringens (strain ATCC 13124 / DSM 756 / JCM 1290 / NCIMB 6125 / NCTC 8237 / Type A)).